A 214-amino-acid polypeptide reads, in one-letter code: Large ribosomal subunit protein uL4c (214 aa).

Residues 42 to 81 (VKQSNEKRQGSANTKTRSEVRGGGRKPWRQKGTGRARAGS) are disordered. The span at 64–75 (GGRKPWRQKGTG) shows a compositional bias: basic residues.

The protein belongs to the universal ribosomal protein uL4 family. Part of the 50S ribosomal subunit.

It is found in the plastid. It localises to the chloroplast. Its function is as follows. Probably binds the 23S rRNA. The sequence is that of Large ribosomal subunit protein uL4c (rpl4) from Pyropia yezoensis (Susabi-nori).